A 390-amino-acid chain; its full sequence is Alkanesulfonate monooxygenase 1 (390 aa).

The tract at residues 364–390 is disordered; that stretch reads TGSSVNTGPFGETIAGDHRPKSLASAS.

It belongs to the SsuD family.

The enzyme catalyses an alkanesulfonate + FMNH2 + O2 = an aldehyde + FMN + sulfite + H2O + 2 H(+). Functionally, catalyzes the desulfonation of aliphatic sulfonates. The protein is Alkanesulfonate monooxygenase 1 (ssuD1) of Mesorhizobium japonicum (strain LMG 29417 / CECT 9101 / MAFF 303099) (Mesorhizobium loti (strain MAFF 303099)).